The following is a 153-amino-acid chain: Large ribosomal subunit protein uL30 (153 aa).

It belongs to the universal ribosomal protein uL30 family. Part of the 50S ribosomal subunit.

The protein is Large ribosomal subunit protein uL30 of Methanocella arvoryzae (strain DSM 22066 / NBRC 105507 / MRE50).